We begin with the raw amino-acid sequence, 1239 residues long: MVHPVQVGKRTRMSFSRLKEVGQMPNLIEVQLDSYDWFLKEGLQEVFDDINPIQDYTGNLNLEFVGYKLDLDSIKYSVEECKERDSTYAAPLKVKVRLLNKETGEIKEQEVFMGDFPLMTEQGTFIINGAERVIVSQLVRSPGVYYDMTVDKTGSKLFSATVIPNRGAWLEYETDSNNIIYVRIDKTRKLPITILARALGYGTDAEIIEFFGEDERLKATIEKDNTKTREEALLEIYKRLRPGEPPTVDSAESLIESLFFDAKRYDLSRVGRYKFNKKLAIHLRITNQIADQDIVNPQTGEILVQKGEKIDKDKAIEIQNCGVNEVYIKIDDKSFKVIGNHFVDIHSLISFDISDLNIKEYVFYPVLKEILDNYADEESIKEEIRKNIYRLIPKHIIREDIYATINYELGLSYDIGYKDDIDHLGNRRLRSVGELLQNQFRIGLSRMERVVKERMTIQDQEVITPQALINIRPVAASIKEFFGSSQLSQFMDQTNPLSELTHKRRLSALGPGGLSRERAGFEVRDVHHSHYGRMCPIETPEGPNIGLINSLATFAKVNEYGFIETPYRRIDPKNKRATNDIVYMTADEEDLYVIARSDEPIDENGYFMDDKVTVRAKEEVLVVPVSEVEYMDISPRQLVSVATAMIPFLENDDASRALMGSNMQRQAVPLLKPQAPIVGTGIEYKAATDSGVLPKAKNAGTVAYVSADEIRVRRDSDGGIDKYKLLKFKRSNQGTCINQRPIVSKGEVVAKETLLADGPSTDLGEIALGKNILMGFITWEGYNYEDAMLISEQLVREDVFTSIHIEEYEAEARDTKLGPEEITRDIPNVGEEALKDIDERGIIRIGAEVRSGDILVGKVTPKGETELTAEERLLRAIFGEKAREVRDTSLRVPHGEAGIIVDVKIFTRENGDELPPGVNKLVRCYIAQKRKISVGDKMAGRHGNKGVISRVLPEEDMPFLPDGRPLQICLNPLGVPSRMNIGQVLEVHLGLAASKLGWHIATPVFDGAIESDIVDCLRKAGYSEDGKTVLYDGRTGEPFDNRVTVGYMYILKLAHLVDDKIHARSTGPYSLVTQQPLGGKAQFGGQRFGEMEVWALEAYGAAHTLQEILTVKSDDVVGRVKTYEAIVKGENIPEPGVPESFKVLIKELQALCLDVKVLNDDNQEIKLKESVDEDVDELEVNIEGAENQLEDKEEKEEEKEENYKEDSDEYDDLREEDVEPDLEELSLDDLDLDDFGDEH.

The segment at 1182 to 1239 (IEGAENQLEDKEEKEEEKEENYKEDSDEYDDLREEDVEPDLEELSLDDLDLDDFGDEH) is disordered. Composition is skewed to acidic residues over residues 1191–1200 (DKEEKEEEKE) and 1206–1239 (DSDEYDDLREEDVEPDLEELSLDDLDLDDFGDEH).

The protein belongs to the RNA polymerase beta chain family. The RNAP catalytic core consists of 2 alpha, 1 beta, 1 beta' and 1 omega subunit. When a sigma factor is associated with the core the holoenzyme is formed, which can initiate transcription.

The catalysed reaction is RNA(n) + a ribonucleoside 5'-triphosphate = RNA(n+1) + diphosphate. Its function is as follows. DNA-dependent RNA polymerase catalyzes the transcription of DNA into RNA using the four ribonucleoside triphosphates as substrates. This Clostridium botulinum (strain Loch Maree / Type A3) protein is DNA-directed RNA polymerase subunit beta.